The following is a 117-amino-acid chain: Large ribosomal subunit protein bL19 (117 aa).

It belongs to the bacterial ribosomal protein bL19 family.

Its function is as follows. This protein is located at the 30S-50S ribosomal subunit interface and may play a role in the structure and function of the aminoacyl-tRNA binding site. The protein is Large ribosomal subunit protein bL19 of Shewanella frigidimarina (strain NCIMB 400).